The primary structure comprises 295 residues: Glycine N-methyltransferase (295 aa).

Residue Val-2 is modified to N-acetylvaline. Ser-4 and Tyr-6 together coordinate (6S)-5-methyl-5,6,7,8-tetrahydrofolate. Ser-10 is modified (phosphoserine). Tyr-22, Trp-31, Tyr-34, and Arg-41 together coordinate S-adenosyl-L-methionine. Tyr-34 is modified (phosphotyrosine). N6-succinyllysine is present on Lys-46. Residues Ala-65, 86 to 88 (DAS), 117 to 118 (NW), 139 to 142 (LGNS), and Arg-178 contribute to the S-adenosyl-L-methionine site. N6-succinyllysine is present on residues Lys-193, Lys-198, and Lys-203. His-217 provides a ligand contact to (6S)-5-methyl-5,6,7,8-tetrahydrofolate. Tyr-223 serves as a coordination point for S-adenosyl-L-methionine. Arg-242 is a binding site for (6S)-5-methyl-5,6,7,8-tetrahydrofolate.

It belongs to the class I-like SAM-binding methyltransferase superfamily. Glycine N-methyltransferase family. As to quaternary structure, homotetramer. As to expression, expressed only in liver, pancreas, and prostate.

It localises to the cytoplasm. The enzyme catalyses glycine + S-adenosyl-L-methionine = sarcosine + S-adenosyl-L-homocysteine + H(+). With respect to regulation, inhibited by 5-methyltetrahydrofolate monoglutamate and by 5-methyltetrahydrofolate pentaglutamate, inhibition is much more effective by the pentaglutamate form than by the monoglutamate form. Two molecules of 5-methyltetrahydrofolate are bound per tetramer. The binding sites are localized between subunits. Inhibitor binding may preclude movements of the polypeptide chain that are necessary for enzyme activity. In terms of biological role, catalyzes the methylation of glycine by using S-adenosylmethionine (AdoMet) to form N-methylglycine (sarcosine) with the concomitant production of S-adenosylhomocysteine (AdoHcy), a reaction regulated by the binding of 5-methyltetrahydrofolate. Plays an important role in the regulation of methyl group metabolism by regulating the ratio between S-adenosyl-L-methionine and S-adenosyl-L-homocysteine. The chain is Glycine N-methyltransferase from Homo sapiens (Human).